The sequence spans 482 residues: Proline--tRNA ligase (482 aa).

This sequence belongs to the class-II aminoacyl-tRNA synthetase family. ProS type 3 subfamily. In terms of assembly, homodimer.

It localises to the cytoplasm. The catalysed reaction is tRNA(Pro) + L-proline + ATP = L-prolyl-tRNA(Pro) + AMP + diphosphate. Its function is as follows. Catalyzes the attachment of proline to tRNA(Pro) in a two-step reaction: proline is first activated by ATP to form Pro-AMP and then transferred to the acceptor end of tRNA(Pro). This chain is Proline--tRNA ligase, found in Natronomonas pharaonis (strain ATCC 35678 / DSM 2160 / CIP 103997 / JCM 8858 / NBRC 14720 / NCIMB 2260 / Gabara) (Halobacterium pharaonis).